Consider the following 346-residue polypeptide: Sesquiterpene synthase Agr1 (346 aa).

Mg(2+)-binding residues include Asp98, Asn234, Ser238, and Glu242. The short motif at 98 to 102 (DNLSD) is the DDXXD motif element. Arg322 and Tyr323 together coordinate (2E,6E)-farnesyl diphosphate.

This sequence belongs to the terpene synthase family. Mg(2+) is required as a cofactor.

It catalyses the reaction (2E,6E)-farnesyl diphosphate = delta-cadinene + diphosphate. The catalysed reaction is (2E,6E)-farnesyl diphosphate = alpha-muurolene + diphosphate. It carries out the reaction (2E,6E)-farnesyl diphosphate = gamma-muurolene + diphosphate. The enzyme catalyses (2E,6E)-farnesyl diphosphate = alpha-selinene + diphosphate. Terpene cyclase that catalyzes the cyclization of farnesyl diphosphate (FPP) to various sesquiterpenes, including alpha-muurolene, gamma-muurolene, alpha-selinene, beta-selinene, delta-cadinene, alpha-cadinol and delta-cadinol. Delta-cadinene is the major product of Agr1. This is Sesquiterpene synthase Agr1 from Cyclocybe aegerita (Black poplar mushroom).